Consider the following 651-residue polypeptide: UvrABC system protein B (651 aa).

The Helicase ATP-binding domain maps to 25-411 (RGISCGAKEQ…TGGVATEQLI (387 aa)). ATP is bound at residue 38-45 (GVTGSGKT). Positions 91 to 114 (YYDYYQPEAYIPQSDVYIEKDALI) match the Beta-hairpin motif. Residues 427-591 (DGQIHDVMCE…IVPRTIQKPV (165 aa)) form the Helicase C-terminal domain. The segment at 593 to 615 (TSLSERVGSSRKKVSRDTNTDPA) is disordered. Residues 616–651 (NRDIVELQKEMLLCAENLDFERAVEIRNEIKRLTAP) enclose the UVR domain.

The protein belongs to the UvrB family. In terms of assembly, forms a heterotetramer with UvrA during the search for lesions. Interacts with UvrC in an incision complex.

The protein resides in the cytoplasm. Its function is as follows. The UvrABC repair system catalyzes the recognition and processing of DNA lesions. A damage recognition complex composed of 2 UvrA and 2 UvrB subunits scans DNA for abnormalities. Upon binding of the UvrA(2)B(2) complex to a putative damaged site, the DNA wraps around one UvrB monomer. DNA wrap is dependent on ATP binding by UvrB and probably causes local melting of the DNA helix, facilitating insertion of UvrB beta-hairpin between the DNA strands. Then UvrB probes one DNA strand for the presence of a lesion. If a lesion is found the UvrA subunits dissociate and the UvrB-DNA preincision complex is formed. This complex is subsequently bound by UvrC and the second UvrB is released. If no lesion is found, the DNA wraps around the other UvrB subunit that will check the other stand for damage. The polypeptide is UvrABC system protein B (Anaplasma marginale (strain St. Maries)).